The sequence spans 416 residues: Tyrosine--tRNA ligase (416 aa).

Residue Tyr-39 participates in L-tyrosine binding. Positions 44–53 match the 'HIGH' region motif; sequence CTAPSLHAGH. Positions 176 and 180 each coordinate L-tyrosine. Residues 236 to 240 carry the 'KMSKS' region motif; it reads KMGKT. Lys-239 is a binding site for ATP. Residues 349–414 form the S4 RNA-binding domain; sequence ISLVDLLHDT…AGKKRHIKVV (66 aa).

This sequence belongs to the class-I aminoacyl-tRNA synthetase family. TyrS type 1 subfamily. As to quaternary structure, homodimer.

It localises to the cytoplasm. The catalysed reaction is tRNA(Tyr) + L-tyrosine + ATP = L-tyrosyl-tRNA(Tyr) + AMP + diphosphate + H(+). In terms of biological role, catalyzes the attachment of tyrosine to tRNA(Tyr) in a two-step reaction: tyrosine is first activated by ATP to form Tyr-AMP and then transferred to the acceptor end of tRNA(Tyr). This is Tyrosine--tRNA ligase from Wolbachia pipientis wMel.